The sequence spans 427 residues: MNKPVTTIAPGCRDTPILKQRGQREVFCGLTGIIWLHRKMQDAFFLVVGSRTCAHLLQSAAGVMIFAEPRFGTAILEEKDLAGLADAQDEIDREVERLLSRRPDIKQLFLVGSCPSEVIKLDLGRAAERLTRKFAPHVRVLNYSGSGIETTFTQGEDACLESMVPVLPETEARELLLVGALPDVVEDQALGLLDKMGIGPVRVLPAPRADGTPGVGPNTVYAVLQPFLGETCSALDRRGARRIDAPFPFGEEGTTLWLRAIAREFGVSDETFEAVTAAPRARARKAIAAAAETLRDKSIFFFPDSQLEIPLARFLTRECGMAAIEVGAPYIHKGLVGPDLDLLAAGPTLSEGQDVDMQLDRCRAARPDLTVCGLGLANPLEAEGLTTKWAIELVFTPVHFYEQAGDLAGLFARPIRRREKLRLEVAE.

Cysteine 28, cysteine 53, and cysteine 114 together coordinate [4Fe-4S] cluster.

This sequence belongs to the BchN/ChlN family. As to quaternary structure, protochlorophyllide reductase is composed of three subunits; BchL, BchN and BchB. Forms a heterotetramer of two BchB and two BchN subunits. [4Fe-4S] cluster serves as cofactor.

The catalysed reaction is chlorophyllide a + oxidized 2[4Fe-4S]-[ferredoxin] + 2 ADP + 2 phosphate = protochlorophyllide a + reduced 2[4Fe-4S]-[ferredoxin] + 2 ATP + 2 H2O. Its pathway is porphyrin-containing compound metabolism; bacteriochlorophyll biosynthesis (light-independent). Functionally, component of the dark-operative protochlorophyllide reductase (DPOR) that uses Mg-ATP and reduced ferredoxin to reduce ring D of protochlorophyllide (Pchlide) to form chlorophyllide a (Chlide). This reaction is light-independent. The NB-protein (BchN-BchB) is the catalytic component of the complex. The sequence is that of Light-independent protochlorophyllide reductase subunit N from Dinoroseobacter shibae (strain DSM 16493 / NCIMB 14021 / DFL 12).